A 298-amino-acid polypeptide reads, in one-letter code: Probable GTP 3',8-cyclase (298 aa).

Residues Arg4–Arg221 enclose the Radical SAM core domain. Residue Arg13 coordinates GTP. 2 residues coordinate [4Fe-4S] cluster: Cys20 and Cys24. Residue Tyr26 participates in S-adenosyl-L-methionine binding. Cys27 provides a ligand contact to [4Fe-4S] cluster. Lys61 serves as a coordination point for GTP. Gly65 is an S-adenosyl-L-methionine binding site. Position 91 (Thr91) interacts with GTP. Ser115 lines the S-adenosyl-L-methionine pocket. GTP is bound at residue Lys152. The [4Fe-4S] cluster site is built by Cys243 and Cys246. Residue Arg248–Arg250 participates in GTP binding. Residue Cys260 participates in [4Fe-4S] cluster binding.

Belongs to the radical SAM superfamily. MoaA family. Requires [4Fe-4S] cluster as cofactor.

It catalyses the reaction GTP + AH2 + S-adenosyl-L-methionine = (8S)-3',8-cyclo-7,8-dihydroguanosine 5'-triphosphate + 5'-deoxyadenosine + L-methionine + A + H(+). It functions in the pathway cofactor biosynthesis; molybdopterin biosynthesis. Its function is as follows. Catalyzes the cyclization of GTP to (8S)-3',8-cyclo-7,8-dihydroguanosine 5'-triphosphate. The polypeptide is Probable GTP 3',8-cyclase (Methanococcus maripaludis (strain C7 / ATCC BAA-1331)).